The following is a 127-amino-acid chain: Fluoride-specific ion channel FluC (127 aa).

4 helical membrane-spanning segments follow: residues 4–24 (LLLA…LLSM), 35–55 (LGTL…FAWF), 71–91 (TGFC…VFLL), and 103–123 (VFVN…LFSA). Na(+)-binding residues include Gly75 and Thr78.

This sequence belongs to the fluoride channel Fluc/FEX (TC 1.A.43) family.

Its subcellular location is the cell inner membrane. It catalyses the reaction fluoride(in) = fluoride(out). Its activity is regulated as follows. Na(+) is not transported, but it plays an essential structural role and its presence is essential for fluoride channel function. Its function is as follows. Fluoride-specific ion channel. Important for reducing fluoride concentration in the cell, thus reducing its toxicity. The chain is Fluoride-specific ion channel FluC from Escherichia coli O17:K52:H18 (strain UMN026 / ExPEC).